The sequence spans 22 residues: XTCESPSHKFKGPCATNRNCES.

The protein belongs to the DEFL family. Group II subfamily.

In terms of biological role, antimicrobial peptide. Active against Gram-positive and Gram-negative bacterial pathogens. This Spinacia oleracea (Spinach) protein is Defensin D1.